A 428-amino-acid chain; its full sequence is Nocturnin (428 aa).

A mitochondrion-targeting transit peptide spans 1–72 (MYQSPRRLCS…PMGNGTSRLY (72 aa)). Residues 21 to 66 (RRTLVPGPRRTLAPPVLGSRPASPQLQAAASGAARSRPRTVSPMGN) form a disordered region. Over residues 39-55 (SRPASPQLQAAASGAAR) the composition is skewed to low complexity. A Mg(2+)-binding site is contributed by Glu-192. Substrate is bound by residues Glu-192, 216–218 (KPW), Asn-260, 283–286 (HLKA), and 321–323 (DFN). Positions 340-350 (NLNSAYKLLSP) are interaction with PPARG. His-411 is a substrate binding site.

It belongs to the CCR4/nocturin family. Interacts with PPARG. It depends on Mg(2+) as a cofactor.

Its subcellular location is the cytoplasm. The protein resides in the nucleus. It localises to the perinuclear region. It is found in the mitochondrion. The enzyme catalyses NADP(+) + H2O = phosphate + NAD(+). It catalyses the reaction NADPH + H2O = phosphate + NADH. Its function is as follows. Phosphatase which catalyzes the conversion of NADP(+) to NAD(+) and of NADPH to NADH. Shows a small preference for NADPH over NADP(+). Represses translation and promotes degradation of target mRNA molecules. Plays an important role in post-transcriptional regulation of metabolic genes under circadian control. Exerts a rhythmic post-transcriptional control of genes necessary for metabolic functions including nutrient absorption, glucose/insulin sensitivity, lipid metabolism, adipogenesis, inflammation and osteogenesis. Plays an important role in favoring adipogenesis over osteoblastogenesis and acts as a key regulator of the adipogenesis/osteogenesis balance. Promotes adipogenesis by facilitating PPARG nuclear translocation which activates its transcriptional activity. Regulates circadian expression of NOS2 in the liver and negatively regulates the circadian expression of IGF1 in the bone. Critical for proper development of early embryos. The chain is Nocturnin from Rattus norvegicus (Rat).